Reading from the N-terminus, the 380-residue chain is Erythronate-4-phosphate dehydrogenase (380 aa).

Substrate is bound by residues Ser-45 and Thr-66. NAD(+)-binding positions include Gln-126–Val-127, Asp-146, Thr-174, Ala-205–Arg-207, and Asp-231. Arg-207 is an active-site residue. The active site involves Glu-236. His-253 (proton donor) is an active-site residue. An NAD(+)-binding site is contributed by Gly-256. Tyr-257 contacts substrate.

The protein belongs to the D-isomer specific 2-hydroxyacid dehydrogenase family. PdxB subfamily. Homodimer.

It is found in the cytoplasm. It carries out the reaction 4-phospho-D-erythronate + NAD(+) = (R)-3-hydroxy-2-oxo-4-phosphooxybutanoate + NADH + H(+). The protein operates within cofactor biosynthesis; pyridoxine 5'-phosphate biosynthesis; pyridoxine 5'-phosphate from D-erythrose 4-phosphate: step 2/5. Its function is as follows. Catalyzes the oxidation of erythronate-4-phosphate to 3-hydroxy-2-oxo-4-phosphonooxybutanoate. In Azotobacter vinelandii (strain DJ / ATCC BAA-1303), this protein is Erythronate-4-phosphate dehydrogenase.